The following is a 479-amino-acid chain: UPF0164 protein TP_0865 (479 aa).

A signal peptide spans 1 to 49; that stretch reads MVRMRRRRACSSGGACGCAAVRGARSFLSVRVLGMRIGMSALCLAPLFA.

The protein belongs to the UPF0164 family.

In Treponema pallidum (strain Nichols), this protein is UPF0164 protein TP_0865.